A 454-amino-acid polypeptide reads, in one-letter code: Flavonoid 3-O-glucosyltransferase (454 aa).

UDP is bound at residue Thr-25. The active-site Proton acceptor is His-26. Residue Arg-89 participates in myricetin binding. Asp-124 acts as the Charge relay in catalysis. Myricetin contacts are provided by His-155, Glu-192, and Phe-202. Residues Ser-282, Ser-308, Trp-334, and Ala-335 each coordinate UDP. UDP-alpha-D-glucose contacts are provided by Ala-335, Gln-337, His-352, Trp-355, Asn-356, Ser-357, and Glu-360. A UDP-binding site is contributed by His-352. UDP is bound by residues Asn-356, Ser-357, and Glu-360. Gly-375 contributes to the myricetin binding site. Asp-376 and Gln-377 together coordinate UDP-alpha-D-glucose.

The protein belongs to the UDP-glycosyltransferase family. In terms of tissue distribution, highly expressed in flower buds, flowers and pods. Lower expression in leaves, petioles and stems.

Its pathway is secondary metabolite biosynthesis; flavonoid biosynthesis. In terms of biological role, catalyzes the glycosylation of flavonoids at the 3-O-position. Glycosylates the 7-O-position if the 3-O-position is not available. Also able to perform 3-O-glycosylation of anthocyanidins. This Medicago truncatula (Barrel medic) protein is Flavonoid 3-O-glucosyltransferase (UGT78G1).